The following is a 485-amino-acid chain: Glutamyl-tRNA(Gln) amidotransferase subunit A (485 aa).

Residues Lys-79 and Ser-154 each act as charge relay system in the active site. Ser-178 acts as the Acyl-ester intermediate in catalysis.

It belongs to the amidase family. GatA subfamily. Heterotrimer of A, B and C subunits.

The enzyme catalyses L-glutamyl-tRNA(Gln) + L-glutamine + ATP + H2O = L-glutaminyl-tRNA(Gln) + L-glutamate + ADP + phosphate + H(+). Functionally, allows the formation of correctly charged Gln-tRNA(Gln) through the transamidation of misacylated Glu-tRNA(Gln) in organisms which lack glutaminyl-tRNA synthetase. The reaction takes place in the presence of glutamine and ATP through an activated gamma-phospho-Glu-tRNA(Gln). The protein is Glutamyl-tRNA(Gln) amidotransferase subunit A of Staphylococcus aureus.